Here is a 203-residue protein sequence, read N- to C-terminus: GTP-binding protein YPTM2 (203 aa).

Residues 15–23, 33–40, 63–67, 121–124, and 151–153 each bind GTP; these read GDSGVGKSC, YLDSYIST, DTAGQ, NKSD, and SAK. The Effector region motif lies at 37-45; sequence YISTIGVDF. Residues C200 and C201 are each lipidated (S-geranylgeranyl cysteine).

The protein belongs to the small GTPase superfamily. Rab family. As to expression, its expression is weak in stems, higher in roots, leaves and coleoptiles, but highest in flowers.

It localises to the cell membrane. Protein transport. Probably involved in vesicular traffic. This chain is GTP-binding protein YPTM2 (YPTM2), found in Zea mays (Maize).